The sequence spans 740 residues: Copalyl diphosphate synthase 2 (740 aa).

K154 is a substrate binding site. The Mg(2+) site is built by D287 and D289. Positions 287–290 match the DXDD motif motif; sequence DADD. Residue K373 coordinates substrate.

It belongs to the terpene synthase family. Mg(2+) serves as cofactor.

It catalyses the reaction (2E,6E,10E)-geranylgeranyl diphosphate = (+)-copalyl diphosphate. Its pathway is secondary metabolite biosynthesis; terpenoid biosynthesis. In terms of biological role, monofunctional diterpene synthase converting geranylgeranyl diphosphate to copalyl diphosphate. This Selaginella moellendorffii (Spikemoss) protein is Copalyl diphosphate synthase 2 (CPS2).